Reading from the N-terminus, the 242-residue chain is MTNSPLIQFNIKKLIDIKMFGLDVSFTNSSIYMLLASTLALTYFYLAFYNRKLIPSRLQVSAEIVYNFVVDMLNQNIGIKGRKFIPLVFSLFIFILFCNLLGMTPYSFTATSHIIVTFTLALLIFLTVTIVGFIKHGMSFLTLFLPQGTPVWLAPLMIVIELFTYLAKPVSLSLRLAANMMAGHVLLKVIAGFTVSLMIYLKFLPIPLIVILIGFEIFVAILQAYIFTILSCMYLNDAINLH.

The next 6 helical transmembrane spans lie at 29-49 (SSIYMLLASTLALTYFYLAFY), 84-104 (FIPLVFSLFIFILFCNLLGMT), 114-134 (IIVTFTLALLIFLTVTIVGFI), 140-160 (FLTLFLPQGTPVWLAPLMIVI), 181-201 (MAGHVLLKVIAGFTVSLMIYL), and 203-223 (FLPIPLIVILIGFEIFVAILQ).

The protein belongs to the ATPase A chain family. As to quaternary structure, F-type ATPases have 2 components, CF(1) - the catalytic core - and CF(0) - the membrane proton channel. CF(1) has five subunits: alpha(3), beta(3), gamma(1), delta(1), epsilon(1). CF(0) has three main subunits: a(1), b(2) and c(9-12). The alpha and beta chains form an alternating ring which encloses part of the gamma chain. CF(1) is attached to CF(0) by a central stalk formed by the gamma and epsilon chains, while a peripheral stalk is formed by the delta and b chains.

It is found in the cell inner membrane. Functionally, key component of the proton channel; it plays a direct role in the translocation of protons across the membrane. This is ATP synthase subunit a from Rickettsia typhi (strain ATCC VR-144 / Wilmington).